We begin with the raw amino-acid sequence, 33 residues long: Defensin-1 (33 aa).

3 disulfides stabilise this stretch: C4/C32, C6/C21, and C11/C31.

This sequence belongs to the alpha-defensin family.

The protein resides in the secreted. In terms of biological role, has antibacterial activity against the Gram-negative bacterium E.coli and the Gram-positive bacteria L.monocytogenes and S.aureus. Has antifungal activity against C.albicans. This chain is Defensin-1, found in Papio hamadryas (Hamadryas baboon).